The chain runs to 13041 residues: MASDINTHPEGATKFWQQHFDGLNASVFPALSSHLTVPRPNAQTAHRISYSTLAKQKWDNTSLCRAALAILLARYSNASEALFGVLVEQFLPSNGEQASTEESPQSILPIRIRLDLEEAGLGLLQAINTLDASLREWKHIGLDAIRGTGEYGSAGCEFQTVLAVTTGKTPRTHRLASCTDRALLLDCRMDDDSATLLARYDPSVIDDLQVARFLKQLGHVIEQLRVQAVDLPLWELGIVTQEDSAEIQKWNSQQLQFSQECIHDVFANRVVDTPQKIAVSAWNGELTFAELDSFSSCLAQHIQSLELGDAKAIPLCFEKSKWAIVGMLGVLKAGRAFTLIDPSNPPARARQICRQTAATISIASPYQCDMMRALVPDCIVVDDDFFKSLAFDTDQFQPTATPQTLAYILFTSGSTGEPKGSMMEHHGFVSCCLEFGAALGINSNTRALQFASYAFGACLLEILTTLMHGGTVCIPSDDERINDAPGFIRRANVNWAILTPSFIGAIQPTTVPNLKTLVLVGEAMPSDIRDVWASHVQLKNAYGQSESATICSVTEVTPATVEAHNIGHAVGARFWITDPNNPNKLAPIGCVGELLVESPGIARGYLIPLPADATPFIDTLPDWYPRTQPLDNFKFYRTGDLVCYRSDGTVVYLGRRDSQIKIRGQRVEIGEVETCLRQQLPSQLVPVVEAVSLSGMSKSMTLIAFLVGENTILEEDVYVLEGSAAQRISSKLRQIVPGYCIPSHYIRINHLPTTATGKCDRKALRAIGTKLLREAVEGMASQEEQESASLMTEGITLERIWFQSLGLKPNSTRHKSNFFNLGGDSIAAIRMVNMARAAGLLLSISDIFQNPSLAGLINVMQQSSTAQDAIPATEYSGPVEQSFAQGRLWFLDQLTTGASWYLMPLAVRIHGPLRVQALSSALHALEQRHETLRTTFEQQDGMGVQIVHPSSKRELRVIDVSGKQNGGYDQVLKREQTTPIDLAKEPGWRAALLRVGDDEHILSIVIHHIIYDGWSLGVLREELGDLYAAALRGPDPLAHMAPLPIQYRDFSVWQKQPQQVAQHQQQLVYWTKQLEDSAPAELLTDFPRPAELSGRAGEVRFTIEGSVFDSLLAFRRVHQTTSFAVLLAVFRAAHYRLTGTEDATIGTPIANRTRAEVEKLIGFFVNTQCMRIAVADDDTFASLVSQVWSVATAAFEHQDVPFERIVSALLPGARDTSRNPLAQLLFALHLEQDLDKINLEGLACETVPTPMATRFDVEFHLFQEDDRLNGVVNFSTDLFEPQTIHSLVSVFQEILRRGLDQPQTPIAHLQLTDGLEELRNAGLLDIKRIDYPREASVVDMFQKQVAACPNVTAVKDSTSQLTYAQLDQESDKIAVWLRKRNIPAETLIALLAPRSCDSVAAFLGILKANLAYLPLDVNVPAARIEAILSTVAGHKLVLLGRDVPLLGTQLADLELVRIGEALRGSSSGSVAADKAIRPTATSLAYVIFTSGSTGQPKGIMVPHRSLVNVIKQRPAYGNVAHMTNLAFDPSLFEMCTALFNGNTLICIDTLVALDATQLPTIFKQEAIRVAMMTPALLTRLLAQATDALHELEALYVLGDRFPPKDAARASELVKTAVYNAYGPSENSICTTLFHAATGAMCTNGVPVGRVINNSGVYVMDPKQSLVSYGVMGELVVAGEGLAIGYTKPELNEGRFLTLTMDGKPVRAFRTGDRVRYRPTDGQLEFFGRMDFQIKIRGHRVELAEVERVLNRHPAIKDAITLLRQHGSSAQDTELVSFIVLGEQKPVKPHRNATDHGGMEIEQLDQKLEANLRAMMQATLPSYMVPSRIIVLDHMPLDKNGKVDRRGLTGLTLSPAMETSSRVVVAARNEIEAVLCEEFAHILGVEIGVTDNFFDLGGHSLMATTLAARLARRLNASISVKDVFDQPIVANLAATIKRGSTPHNAIPPTKYSGPVEQSFAQGRLWFLDQLNLGAAWYHMPLAVRLRGPLHLEALTAALHALEERHETLRTVFEEQDGVGMQIVRPSSKTPLRIIDVSTKERGYAELLKQEQTTPFDLATELGWRVALLRQGKDDHILSIVIHHIISDGWSLDILCEELGQFYAAVLRGQDPLAQISPLPIQYRDFSLWQKQPEQVAEHHRQLEYWTTQLEGSVPAELLTDLPRPTIQSGKAGVIPITVNGPVYERLRAFSRAHQTTAFAVLLAAFRATHYRLSGVADATIGTPIANRNRPELENMIGFFVNAQCMRITVEQDDTFETLVRQIRFTATAAFANQDVPFEHIVSALMPDSRDTSRNPLVQLMFALHAYKDLGKIELEGYVAEPVHTTLSTRFDLEFHMFQETNHLSGYVLYATDLFEPESIEGMVSIFKEILARALDQPQTPLALLPLTDGLAELRRRGLLEIERPSYPRESSVVDVFCSQVAASPNATAVKDSISQLTYAQLNEQSDKVAAWLHQCNLPTETLVAVLAPRSCQTVVAFLGILKANLAYLPLDVNVPAARIEAILSEVSGHILVLLGSHVSAPKIELADVEFVKIDNTVEHNLPGRIGSAPSATSLAYVIFTSGSTGKPKGVKVEHRGIVRLVKESNVVAKMPQAARIAHLSNIAFDAATWELYAALLNGGTLVCINYLTTLDSKALEAVFEQEKIQAAMLPPALLKQYLVNIPAAIGALEVVLVAGDRFDRRDAAATQALVGAGVYNAYGPTENTTLSTIYNVVQGDANVNGVPIGRPVSNSGAYIMNMNQELVPIGVIGELVVVGDGVARGYTDPALDVNRFVNVTIEGQTMRAYRTGDRARYRPKDAQIEFFGRMDQQIKIRGHRIEPAEVEHALLNNDLLQDAAVIIRKQQNDELEMVAFVEANSNKSIEQEASNQVEDWGAQFESNVYAEIEAIDASAVGNDFMGWTSMYDGSAIDKAEMQEWLDDTMQTILDGRPAGRVLEIGTGTGMILFNLGEGLQSYVGLEPSTSAAAFVNRRIQTLPAFAGKAEVHVGTATDISQLQDLRPEVVVINSVAQYFPSPEYLSKVLYALAQIPGVKRLFFGDMRSYAINDQFLAARALHNIGSKATKSAIRSKMVDLENSEEELLVDPTFFTNLATELPEVEHVEILPKRMQATNELSAYRYAAVVHIRDSSERAQTVHAIKSSAWVDFSKSQMDRKALISLLQSSVNTEAVAIGNIPYSKTIMARHVVQSLDEDNADKDIAQDKPDKPTWISAVRSNAEHCPSLSALDLVQLGEEAGFCVELSWAQQRSHHGAIDAVFHHYQPAREGSRVLFQFPTDTYRRQSGPLTNRPLQRIQSRRMETQVREKLRAVLPSYMIPSLIVLVDQMPLNPNGKVDRKALERRAQAVLRVEKPTSERVGARNETEAVLCEEFTDVLGLEVGITDNFFDLGGHSLMATKLAARISRRLDARVSVKDVFDQPVIVDLAASIRRGSTPHNPITPTEYSGPVEQSFAQGRLWFLDQLNLGASLYLMPLALRLRGPLRIDALTAALFALEQRHETLRTVFKEQDGVGIQIIQPSQKKKLRTIDVSAGDFSEALHHERTAPFDLASEPGFRVALLQLEPSDHVLSIVMHHIIYDGWSIDILCQELGQFYAAAIQGQDPLGQVSPLPIQYRDFSVWQKQPEQVAEHERQLAYWIDQLADSAPAEFLVDLPRPPVLSGDAGLVHLTIDGPIYDRLRAFCRVHQTTTFAVLLAAFRATHYRLTGAEDATVGTPIANRNRPELENLVGFFVNTQCMRISVGDDDTFEQLVRQVRSTATAAFANQDVPFERIVSTLLPGSRDTARNPLVQLMFAVHSLKDLGKIQFEGLVGETIPTASFTRFDVEFHLFQEVGRLSGNVLFSTDLFEPETIQGMVSVFMEILRGALDQPQIPIAVLPLTDGLTELRNRGLLEVEQPQYPRDSSVIDVFRAQVVACPDAIAVKDSTSQLTYAQLDEQSDEVAVWLHQRKLPAESLVAVLAPRSCETIITFFGILKANLAYLPLDINVPAARIQAILSSVAGKKILLLGSDQAQPEIRLDDVEFVQINETIDHNMAKDNTTRSGPLATSLAYVIFTSGSTGQPKGVKVEHRGIVRLVKNSNVVAKMPEAACVAHLSNLAFDAATWEIYAALLNGGSLICIDYFTTLDSKVLEAVFEREQIRAAMFPPALLKQCLLNIPTTISALDVILAAGDRFDRRDAIAAQALVGGGVYNAYGPTENTTLSTIYNVVDGDTNVNGIPIGLPVSNSGVYVMDPNQQLVPLGVMGELVVVGDGVARGYTDPALDVDRFIKVEIDGQIVRAYRTGDRVRHRPKDGQIEFFGRMDQQVKIRGHRIELAEVEHVILDNSLVQDAAVIVHKQADQEIEMIAFAIVRGDNDSKHPEKDILDRVKALLPSYMVPAQMVLLNSMPLNANGKVDRKELAKRAGTVPRSEMAYVAPERVPPRNEIETILCEEYAEVLGVEVGVMDNFFDLGGHSLMATKLAARATRRLDAKLSVKDIFDYPILANLAAAVQRGSTPHNAILATTYSGPVEQSFAQGRLWFLDQLNVGSNWYLQPIAIRIRGSLNINALTTALHALEQRHETLRTTFEEEDGVGMQVVQEYDPIELRIMDIAADYDGDYTEALKGEQTTPFDLESEPGWRVSLLRMNDNDHILSLVLHHIISDGWSVDVLRQELKQFYAAALQGLDPLSGADPLPIQYRDFSLWQKQPEQVAEHERQLKYWVEQLADNSPATLLADRPRPSVLSGQAGSVPLSIEGQVYEKLQAFCRAHQTTSFSVLLAAFRAAHFRLTGVDDATIGIPIANRNRPELEHLIGFFVNRQCMRITVGEDDTFESLIRQVHSTATAAYANQDVPFERIVSSLLSGSRDTSRNPLVQLVFAVHSQKNLGKFELQDLTSEPVAGAISTRFDAEFHLFQEEERLNGVVYYATDLFDAETIQGVVSVFQEILRRGLNHPRTPIAALSLTDGLDNLRKMNLVHFKRTDYPRDSSMVDIFREQVATYPDVIAVKDSTLQLTYAQLDQQSDEIATWLRNKKMAPETLVGVLAPRSCQTIVAFLGVLKANLAYLPLDVNAPMARVETIMSSVPGSKLLLLGSDVPAQEIQLQNVELVRIEDTLGHAASAGTATTEPSPTSLAYVIFTSGSTGKPKGVMVEHRSVIRLVRKESNSMSKMSSRARVAHLTNIAFDVSAWEVYATLLNGGTLVCVDYFTSFDAKALGLLFEREQITAAMITPTLLKQCITIVPEALRKLSVLYTGGDRFDRRDAIATKALVKGPVYNAWGPTETTIVSTIYELADDDQFTNGVPIGKAVSNSWAYVMDLNQQLVPVGVMGEAVVIGDGLARGYTDPALDCNRFVHITIDGKRVRAYRTGDRARYRPKDGEIEFFGRMDRQLKIRGHRIEPAEIEHAMLGHNDIVDVAIVTRHQDGAGLEMVAFVTAHTNKSIERNEATNQVAGWGDHFESSTYAELDTLVKSDVGKDFVGWTNMYDGGAIDQAEMQEWLDDTIQTIVDGQPAGHVFEIGTGTGMIMFGLGKQGLQSYVGLEPSTSATTYVNRKIKTAPTVAGKAKVYVGTAMEAAQLNGLHPEVVVINSVAQYFPTPEYLLEVVGILTQMPGVKRLFFGDIRSYATNRKFLAARALHMLGSNAKKHDIRRKMAELDEFEEELIVDPSFFTGLVSRLPGQVKHVEILPKQMIATNELSAYRYAAVVHLALPEEQHIAKIEKGAWVDFTATKMDRSALVHHLQSSSNAEIVAISNIPFSKTNFDCHLLASLDEDEEHSLDGSAWIKTIHSSAEQCPSLSATDLVEVAKEVGFRVELSWARQKSQNGALDAIFHQYQSPKEGSRVLIQFPTDDQGRSMESLTNRPLQRVQSRRIETQIRERLQAVLPSYMIPARIVVLNEMPVNANGKVDRKELTRRAKVVPRIETAAERIQPRNEVEAVLCEEFSEVLGVEVGVTDNFFDLGGHSLMATKLAARTGRRLDAKVSVKDVFDHPVLADLAAAIQRGSTPHSAIVTTEYSGPVEQSYAQGRLWFLEQLNFKATWYLLPLAVRIRGPLNIKALTTALHALEQRHETLRTTFIERDGVGKQAVQPFQPKELEIVDIAADHQGDYLKVLRDEQTTMFNLATQPGWRVTLHRVDQNTHNLSIVMHHIISDGWSVDVLRHELRQFYAAALRGQDPLAHISPLPIQYRDFSLWQKQPDQIIEHAKQLEYWTKQLADSSPAELPTDLPRPAVLSGKAGEVALSVKGPLYERLQAFCKTHQTTAFATLLAAFRATHHRLTGAEDATIGTPIANRNRPELENLIGFFVNAQCMRITIDGDETFESLIRQVRATATAAIANQDVPFERIVSTMQSTSRDTSRNPLVQLMFALHSQQDLGKIQLEGCETEPIPRAVRTRFDLEFHLYQEQGSLGGIVYFATDLFEPESIEGMVSIFKEILARALDQPQTPLALLPLTDGLAELRRRGLLEIERPSYPRESSVVDVFCSQVAASPNATAVKDSISQLTYAQLNEQSDKVAAWLHQCNLPTETLVAVLAPRSCQTVVAFLGILKANLAYLPLDVNVPAARIEAILSEVSGHILVLLGSHVSAPKIELADVEFVKIDNTVEHNLPGRIGSAPSATSLAYVIFTSGSTGKPKGVKVEHRGIVRLVKESNVVAKMPQAARIAHLSNIAFDAATWELYAALLNGGTLVCINYLTTLDSKALEAVFEQEKIQAAMLPPALLKQYLVNIPAAIGALEVVLVAGDRFDRRDAAATQALVGAGVYNAYGPTENTTLSTIYNVVQGDANVNGVPIGRPVSNSGAYIMNMNQELVPIGVIGELVVVGDGVARGYTDPALDVNRFVNVTIEGQTMRAYRTGDRARYRPKDAQIEFFGRMDQQIKIRGHRIEPAEVEHALLNNDLLQDAAVIIRKQQNDELEMVAFVEANSNKSIEQEASNQVEDWGAQFESNVYAEIEAIDASAVGNDFMGWTSMYDGSAIDKAEMQEWLDDTMQTILDGRPAGRVLEIGTGTGMILFNLGEGLQSYVGLEPSTSAAAFVNRRIQTLPAFAGKAEVHVGTATDISQLQDLRPEVVVINSVAQYFPSPEYLSKVLYALAQIPGVKRLFFGDMRSYAINDQFLAARALHNIGSKATKSAIRSKMVDLENSEEELLVDPTFFTNLATELPEVEHVEILPKRMQATNELSAYRYAAVVHIRDPARQAQTVHTIDPTAWIDFSASQMNRTALANLLQNSADAAAIAVSNIPYSKTILARHIVQSLDDDLTDSDDPQDELEGAAWMSAIRSNIKTCASLSAFDLAQLAQEKGFRVELSWARQRTHHGALDAVFHHYKSNQDGGRVLVQFPTDSRPRLSGQLTNQPLQRLQSRRLEAQIRDQLSALLPSYMIPSLIVMVDEMPLNANGKVDRKALERRARMVQKVEKPASERVGARNEIEAALCEVFVDLLGTEVSITDNFFNLGGHSLMATKLAARISRRLDARISVKDVFDYPVLADLAGAVQRGSTPHNPIVATPYSGPVEQSFAQGRLWFLDQLNAGSLWYIQPIAVRVRGSLNIGALTTALNALEKRHEPLRTTFEEHDGIGVQVVQPHQPKKLRIVDTVANYQGDFIRALRKEQQTLFNLATEPGWRVSLLRIGEDDNILSIVMHHIISDGWSVDILRQDLKLFYAAALKSQEPQVDALPIQYRDFAFWQKQPEQVAEHQRQLDYWIEQLKDSKPAELITDFPRPEVLSGTAGIVQLAVDGQVYEGLRAFCRIHQTTSFVVLLAAFRAAHYRLTGTEDATIGSPIANRNRPELESLIGFFVNTQCMRIMVGEDDTFERLVQQVRSTTTAAFANQDVPFERIVSSVQSTSRDASRNPLVQLMFALHSQQGIGLMELEGVETEPIARDVSTRFDIEFHLYQKEESLHGVVHFAADLFEPETIQGLVSVFQEILRRGLETPRLPISILPLDNNIPELLVGMLDVDTPEYPRDSSVVDVFRTQVAASPDAIAVKDSTSQLTYAQLDEESNKVATWLSQRQLAPETLVGVLAPRSCPTIVTFFGILKASLAYLPLDVNVPSARIEAILSAVPDHKLVFLGADVPDPEAPLVNVELVRIDDILRQSIHASNAGLLANHPLATSLAYVMFTSGSTGKPKGVMVEHRSIVRLVKETNLVPAVEAVSSVAHISNVAFDAATWEIYAALLNGGTTVCIDHITVLDPAKLALVFSSEKIKAAFFSTALLKQRLYEEPSTITGLDLLYAGGERMRPQDALKTRELVRGSFCHVYGPTENTTFSTVYPMGVEERCVNGLPIGRAVSHSGAVIMDANQRLVPLGVMGELVVTGDGLARGYTDPALNRDRFVEVNIHGQVLRAYRTGDQARYRPKDGQIEFSGRMDRQLKIRGHRIEPAEVEHAILSHDDIRNAVVVTRQQEGQDLEMVAFVSTPNDQTVERDEARNQVEDWGAQFESNVYAEIEEIDSSAVGNDFMGWTSMYDGTAIDKAEMQEWLDDTMRTLHDGRDPGHVLEVGTGTGMILFNLGKGLQSYVGLEPSTSAAAFVNRKIETISSLAGKAKVEIGTATDVGQLKNLRSDLVVINSVAQYFPSPEYLVEAVTALVHIPGVKRLFFGDMRSYAMNKQFLVARALRTLGAKANKDDVRRKMVELEEFEEELLVDPAFFTGLANWLSEVEHVEILPKQMTSTNELSSYRYAAIVHLRLPGQEAQPVVTVNQDAWVDFGGSKMDRHALLHHLQSSPKAETVAISNIPYSKTIYERHVLASLDDDEVEDSLDGSAWLSAVRSTAEQCASLSGVDLVQIAKEAGFRVELSWARQRSQKGGIDAVFHHYESVHDGARVMVKFPTDDQGRALDSLANRPLQRLQSRRIEVQIRERLQAVLPSYMMPVRIVVLDEMPMNANGKVDRKVLTRRAKMISRVETTAERVGPRNEIEALLCEEFAEVLGVEVGINDDFFDLGGHSLMATKLAARSSRRFDAKVSVKDVFDHPILADLAASIQRGSTPHNPILATQYSGPVEQSFAQGRLWFLEQLNVSSTWYLQPIAVRMRGPLKIEALAAAFHALEERHETLRTTFEEHDGIGMQVVQPHRPKELRVIDVQAEHDGDYTQALHTEQTTTFNLETEPGWRVSVFRLNEDDNILSIVMHHIISDGWSFDILRKEIREFYNAALKGKDPLAQMSPLHIQYRDFSVWQKQLNQITEHKRQLDYWTKNLADNTPAELPTDLPRPAVLSGKAGVIQLSITGPVYDRLRAFCRVHQTTLFTVLLTVFRATHYRLTGAEDATIGTPIANRNRPELENLIGFFVNTQCMRITVEEEDTFETLIHQVRTTTTAAFANQDVPFERIVSALLPGSRDTSRNPLSQIMFAVHSQKNISKIELDGLESEAISRATSTRFDLEFHLFQEEKGLGGIVLFAADLFEPETIDSLVFVFQEILRQSLETPKTPIAVLPLTNGIAQLRSMCVLDIEKTAYPQDSSVIDIFRQQVAARPDATAVTDSTSQLTYAQLDLHSDELASWLRQKKMAPETLVGVLAPRSCQTIVTFLGILKASLAYLPLDVKVPVARIEAILSSISGQKLILLGQDVPVPEIQLPDVDVVPISEILGRSVPSRATDKSLGPLARNLAYVLFTSGSTGKPKGVMIEHRSIVRLVKETNLISKLPNAPRTAHLTNLVFDNSAWEIYSTLLNGGTLVCIDYATVLDSKALETVFKEQRIQTSLMPPALLKECLANMPTMFDDVEVLYALGDRFDKQDAMKARSIVKTAVYNAYGPTENTVISTIYEIAKDDSFVNGVPIGRSISNSGAFIMDSRQQLVPVGVLGELVVSGDGLARGYTDPTLDVNRFVEVTVDGQHVRVYRTGDRVRFRPKDGQIEFFSRMDQQVKIRGHRIEPAEVEHVILTNKIIRDAAVAIRRPEGQEPEMVAFVTTHENTSIEKQSVEEFAARIENEVRRWIKTLLPLYMVPTQIVVLDRMPVNANGKVDRKELAQRAQTLQKSEAGSLPSVRVPPTNDMERILCEEFADVLGVEVGITDNFFDFGGHSLMATKLAARISRRVNARVSVKSVFDHPVLVDLASTIKQDSIMHKPIPQTAYTGPVEQSFAQGRLWFLDQLNFGASWYLMPLALRLQGSLHVKSLTTALFALEQRHETLRTTFEEQDGVGIQIVHPANKKDLRILDVSKEQNSDYAKVLHKERTIPIDLTSEPGWRVSLIRLGEDDHILSIVMHHIISDGWSVDVLRQELKQFYTAALKGQDPLAQIDALPIQYRDFSLWQKLPDQVAEHQRQLEYWAEQLADNTPAELLTDLPRPDVLSGKAGAVQLTIDGPVFDQLQAFCRAHQTTMFTVLLAVFRTTHYRLTGATDATIGTPIANRNRPELERLVGFFVNTQCIRITVDVEDTFEALVRQVHSTSTTAFANQDVPFERIVSTILPGSRDASRNPLAQLMFAVHSQRDISKFQLEGLDTKPIPTAASTRFDIEFHMFQQAERLSGRVLFAEDLFELETIQGMVVIFKEILRRGLETPQTPLAVLPLTDGLAHLRSQGLLEIERPEYPRDSSMIDVFRAQVAACPDAIAVKDSTSQLTYSQLDDQSDKITAWLLQRKIPAESLVAVYAPRTCQTIITFFGILKANLAYLPLDINVPAARIEAILSTISGHKLVLLGSQVSAPAVQLKDVEYVWIDEAMAETVRTCTSPEPSATSLAYVIFTSGSTGLPKGVKVEHRGVVRLVKQSNVVAKMPQAARVAHLSNIAFDAATWEIYAALLNGGSLICIDYFTTLDSKELEAVFAREKIQAAMLPPALLKQCLVNIPATISALDVVLAAGDRFDRRDAAATQALVGGCVYNAYGPTENTTLSTIYNVVKGDANVNGVPIGRPVSNSGAYIMDPNQQLVPKGVMGELIVVGDGVARGYTDPALDVNRFIEIAIDGDQAVRAYRTGDRARYRPKDGQIEFFGRMDQQIKIRGHRIEPAEVEHAVLDNSMVQDAAVITRKQDQELEMIAFVTTRSDKEIDNDEASNQVEDWGNQFESNIYAEIEEIDSSAIGKDFMGWTSMYDGSAIDKDEMQEWLDDTMSTLLDGRQPGHVLEIGTGTGMILFNLAERMGLKSYVGLDPSEKATSFVKQAIKSRPSLAGKAEVHVGTATDVARMRDLHPEVVVINSVAQYFPSPEYLADVVGALVRIPGVKRLFFGDIRSYATNNHFLAARALHKLGEKATRDTVRSKMAELEGYEEELLVDPTFFTSLTAKLHGQVEHVEILPKRMQATNELSAYRYAAIVYIRDPKRAQTVQTVKSDAWVDFSTSQMDRSVLVSLLQSSDAEAIAVSNIPYSKTIVARHIVESLSAEDSQEMLDGPAWISAVRSSAEQCASLSAIDLVQVAKENGFRVELSCARQRSHNGAIDAVFHHYKPAQEGSRVLLQFPTDNHIRAGSLTNRPLQRLESRRVETKLKEHLFSVLPSYMIPSHIVMVDQMPLNANGKVDRKALAQRAEAVLKIEKPASERVSARNEVEAVLCEEFTDVLGVEVGITDNFFDLGGHSLMATKLAARISKHLDARVSVKDVFDYPVVADLAASIERNSIPHNPIPSTNYSGPVEQSFAQGRLWFLDQLNMGVSELYLMPLALRLRGPLRVDAFAAAVSALEARHETLRTTFMDHDGVGMQVILPSNSKKLRVIDASENDYIDILRQERTAPFNLTTEPGFRIALLQLGQTDFILSIVMHHIIYDGWSIDVLCRELGRFYSAALQGQDPLAQVSPLPIQYRDFSIWQKRPEQVAEHERQLQYWTEQLADSSPAELLTDLPRPLVPTGKAGIVQLTIEGAVYERLRAFCRVHQTTSFAVLLAAFRATHYRLTGAEDATIGSPIANRNRPELESLIGFFVNTQCIRVTIREDDTFDKLVQQVRATTTAAQVNQDVPFERIVSALMPGSRDTSRNPLVQLSFALHSQHDLGRIDLQDLTGEALPTPVFTRLDVEFHLFQQAEKFGGSVLFATDLFEPETIQGLVSVFQEVLRRGLEQPQTPIAVLPLDNASEDLRSMGLLQMERTNYPRDSSVVDVFRDQVAANPRAIAVKDSVLELTYAQLDEKSDQLAAWLCQHNIPAETIVGVLAPRSCETIIAFLGILKANLAYLPLDDNVPAARIETILSAVPGHTLVLLGSHVAAPSIGLADAEFVNINHTLGHSLQLNSTCAKLQPSATSLAYVIFTSGSTGKPKGVMIEHRSIVRLVKNSNTLAKLPRAARVAHQFNLAFDAANYEIYGTLLNGGALICVDYSTLLDIDALVAMFKREKITASSLSPGLLKQCVNSAPEMLKALQVIYTGGDRLDGRDAIELQALVPGGVYNMYGPTENTVISTLYNLGDKHSYVNGVPIGTTVSNSGAYVMDALQQLVPVGVMGELVVTGDGLARGYTDPELDRNRFIKVNIDGQVVRAYRTGDRVRYRRIDGQLEFFGRMDQQIKIRGFRIETAEVENAMLSHSAVRNAAVVVPTQDIQEKGMIGFVVIENNTPKNEESKEEHLLQTELAILNRMKSILPPYMLPSRIIILDQMPSNFNGKVDRKELDRMAQSVPRQKTTAGRIVPRNELEASLCKEFAEVLGVEVGITDNFFDLGGHSLLATKLAARISRRLDTRVSVKDVFDQPVPADLALKVSSYISQGHAMDNGTLSTTNSIPFQLLHFEDSQKFIDRDIVPQLAHQSAKIVDVYPVTWIQKHFLVDPATGLPRTPSLFFVDFPANADCDKICNASRSLIQLFDIFRTVFVQAAGNFYQVVLEELDIPISVIETEDISTATRVLKEQDQQNPLQFGQGFLRFAVVKTRSAVRLVLRISHCLYDGLSFEHVVQSLHALYNGDRIPTQPKFVQYVQHLTDSRKEGYDFWLSVLEESSMTVVETGRRAQQLSSPEGAWFVEKIIKAVIPANSDGITQATVFTTASTILLARMTGSSDITFSRLVSGRQSLPINDQHIVGPCTNIVPVRIRMTDGTNARELLGMVQDQYIDSLPFETLGFDDIKENCTKWPASTTNYGCCSTFQNFEMQPQSQVQDERVRLAGLTNFKDAELLNGATATNKRVLDDVPMHEIDMIGIPEPDGLHVRVVLTASRQIFEEEVVDRMHEEFCDIILGLNKILQK.

The interval 267-663 (ANRVVDTPQK…GRRDSQIKIR (397 aa)) is adenylation 1. The 77-residue stretch at 788–864 (ASLMTEGITL…GLINVMQQSS (77 aa)) folds into the Carrier 1 domain. Serine 825 carries the post-translational modification O-(pantetheine 4'-phosphoryl)serine. The interval 882 to 1313 (SFAQGRLWFL…TPIAHLQLTD (432 aa)) is condensation 1. The segment at 1341–1736 (FQKQVAACPN…GRMDFQIKIR (396 aa)) is adenylation 2. Residues 1865 to 1939 (AARNEIEAVL…NLAATIKRGS (75 aa)) form the Carrier 2 domain. At serine 1899 the chain carries O-(pantetheine 4'-phosphoryl)serine. The tract at residues 1957–2383 (SFAQGRLWFL…DQPQTPLALL (427 aa)) is condensation 2. The segment at 2418–2812 (QVAASPNATA…GRMDQQIKIR (395 aa)) is adenylation 3. Residues 2891 to 3023 (VGNDFMGWTS…EYLSKVLYAL (133 aa)) form a methyltransferase (M) domain 1 region. One can recognise a Carrier 3 domain in the interval 3353–3427 (GARNETEAVL…DLAASIRRGS (75 aa)). Position 3387 is an O-(pantetheine 4'-phosphoryl)serine (serine 3387). A condensation 3 region spans residues 3445–3869 (SFAQGRLWFL…DQPQIPIAVL (425 aa)). The tract at residues 3901-4300 (FRAQVVACPD…GRMDQQVKIR (400 aa)) is adenylation 4. Residues 4412–4486 (PPRNEIETIL…NLAAAVQRGS (75 aa)) enclose the Carrier 4 domain. Serine 4446 is modified (O-(pantetheine 4'-phosphoryl)serine). The tract at residues 4504–4935 (SFAQGRLWFL…TPIAALSLTD (432 aa)) is condensation 4. The tract at residues 4963 to 5362 (FREQVATYPD…GRMDRQLKIR (400 aa)) is adenylation 5. The interval 5430–5567 (TYAELDTLVK…VAQYFPTPEY (138 aa)) is methyltransferase (M) domain 2. Residues 5897–5971 (QPRNEVEAVL…DLAAAIQRGS (75 aa)) enclose the Carrier 5 domain. Residue serine 5931 is modified to O-(pantetheine 4'-phosphoryl)serine. Residues 5989–6416 (SYAQGRLWFL…DQPQTPLALL (428 aa)) are condensation 5. Positions 6451–6845 (QVAASPNATA…GRMDQQIKIR (395 aa)) are adenylation 6. Residues 6924–7056 (VGNDFMGWTS…EYLSKVLYAL (133 aa)) are methyltransferase (M) domain 3. A Carrier 6 domain is found at 7386 to 7460 (GARNEIEAAL…DLAGAVQRGS (75 aa)). An O-(pantetheine 4'-phosphoryl)serine modification is found at serine 7420. Residues 7478 to 7901 (SFAQGRLWFL…GLETPRLPIS (424 aa)) are condensation 6. The adenylation 7 stretch occupies residues 7934-8335 (FRTQVAASPD…GRMDRQLKIR (402 aa)). Residues 8404–8540 (YAEIEEIDSS…AQYFPSPEYL (137 aa)) are methyltransferase (M) domain 4. The 75-residue stretch at 8871-8945 (GPRNEIEALL…DLAASIQRGS (75 aa)) folds into the Carrier 7 domain. An O-(pantetheine 4'-phosphoryl)serine modification is found at serine 8905. The condensation 7 stretch occupies residues 8963-9392 (SFAQGRLWFL…PKTPIAVLPL (430 aa)). The segment at 9422–9822 (FRQQVAARPD…SRMDQQVKIR (401 aa)) is adenylation 8. The 75-residue stretch at 9943 to 10017 (PPTNDMERIL…DLASTIKQDS (75 aa)) folds into the Carrier 8 domain. An O-(pantetheine 4'-phosphoryl)serine modification is found at serine 9977. The tract at residues 10035–10462 (SFAQGRLWFL…ETPQTPLAVL (428 aa)) is condensation 8. Positions 10494-10892 (FRAQVAACPD…GRMDQQIKIR (399 aa)) are adenylation 9. Positions 10959 to 11105 (IYAEIEEIDS…EYLADVVGAL (147 aa)) are methyltransferase (M) domain 5. One can recognise a Carrier 9 domain in the interval 11428–11502 (SARNEVEAVL…DLAASIERNS (75 aa)). Serine 11462 is subject to O-(pantetheine 4'-phosphoryl)serine. The tract at residues 11520 to 11945 (SFAQGRLWFL…EQPQTPIAVL (426 aa)) is condensation 9. Residues 11977–12377 (FRDQVAANPR…GRMDQQIKIR (401 aa)) are adenylation 10. The Carrier 10 domain maps to 12495-12569 (VPRNELEASL…DLALKVSSYI (75 aa)). Serine 12529 is subject to O-(pantetheine 4'-phosphoryl)serine. Residues 12647–13032 (FPANADCDKI…RMHEEFCDII (386 aa)) are condensation 10.

The protein belongs to the NRP synthetase family.

Its pathway is secondary metabolite biosynthesis. Functionally, nonribosomal peptide synthetase; part of the gene cluster that mediates the biosynthesis of KK-1, a novel cyclic depsipeptide with 10 residues which is a promising active compound with high activity against many plant pathogens, especially Botrytis cinerea. The nonribosomal peptide synthetase (NRPS) kk1B catalyzes the elongation and cyclization of the decapeptide chain composed of 1 D-lactic acid residue (D-Lac), 1 pipecolic acid residue (Pip), 1 aspartic acid residue (Asp), 1 isoleucine residue (Ile), 1 glycine residue (Gly), 1 tyrosine residue (Tyr) and 4 valine residues (Val). The Asp, Ile and 3 Val residues are N-methylated by the 5 methyltransferase domains from the NRPS (found in modules 3, 5, 6, 7 and 9), whereas the Tyr residue is O-methylated by the cluster encoded O-methyltransferase kk1A. Cyclization with the hydroxy group of the D-lactic acid as a nucleophile is presumed to occur in the final module of NRPS, resulting in the formation of the depsipeptide ester bond through macrocyclization by the C-terminal C domain. The thioesterase kk1J is likely to be involved in the corrective mechanism of peptide chain synthesis. The D-lactate dehydrogenase kk1H is involved in the synthesis of D-lactic acid from pyruvic acid, which is recognized by the A domain of the first kk1B module. The pyrroline-5-carboxylate reductase kk1I is involved in the synthesis of the L-pipecolic acid residue of KK-1 from delta-1-pyrroline-5-carboxylate (P5C), a metabolic intermediate of lysine. It is still unclear how kk1C and kk1D are involved in the production of KK-1. The polypeptide is Nonribosomal peptide synthetase kk1B (Curvularia clavata).